A 199-amino-acid chain; its full sequence is A-type ATP synthase subunit E (199 aa).

Belongs to the V-ATPase E subunit family. In terms of assembly, has multiple subunits with at least A(3), B(3), C, D, E, F, H, I and proteolipid K(x).

Its subcellular location is the cell membrane. Functionally, component of the A-type ATP synthase that produces ATP from ADP in the presence of a proton gradient across the membrane. This is A-type ATP synthase subunit E from Pyrococcus abyssi (strain GE5 / Orsay).